Consider the following 214-residue polypeptide: MERRQAKIHVFVLIGLILLNSINQISSLSVTVNDEECVQEYVLYEGDTVSGNFVVVDHDIFWGSDHPGLDFTVTSPAGNIVQTLKGTSGDKFEFKAPKSGMYKFCFHNPYSTPETVSFYIHVGHIPNEHDLAKDEHLDPVNVKIAELREALESVVAEQKYLKARDTRHRHTNESTRKRVIFYTVGEYIFLAAASGLQVLYIRKLFSKSVAYNRV.

The N-terminal stretch at 1–27 is a signal peptide; sequence MERRQAKIHVFVLIGLILLNSINQISS. At 28–178 the chain is on the lumenal side; the sequence is LSVTVNDEEC…RHTNESTRKR (151 aa). The 88-residue stretch at 35–122 folds into the GOLD domain; sequence EECVQEYVLY…PETVSFYIHV (88 aa). Residues 140–158 adopt a coiled-coil conformation; the sequence is VNVKIAELREALESVVAEQ. Residues arginine 164 and arginine 169 each carry the omega-N-methylated arginine modification. Asparagine 172 is a glycosylation site (N-linked (GlcNAc...) asparagine). Residues 179-199 form a helical membrane-spanning segment; the sequence is VIFYTVGEYIFLAAASGLQVL. Over 200–214 the chain is Cytoplasmic; sequence YIRKLFSKSVAYNRV. A COPII vesicle coat-binding motif is present at residues 204–205; the sequence is LF. The COPI vesicle coat-binding motif lies at 204-214; it reads LFSKSVAYNRV. The Required for the export from the endoplasmic reticulum to the Golgi motif lies at 213–214; sequence RV.

The protein belongs to the EMP24/GP25L family. As to quaternary structure, probably oligomerizes with other members of the EMP24/GP25L family. Associates with the COPI vesicle coat (coatomer). Associates with the COPII vesicle coat (coatomer).

The protein localises to the golgi apparatus. Its subcellular location is the cis-Golgi network membrane. It is found in the golgi stack membrane. In terms of biological role, involved in vesicular protein trafficking. Mainly functions in the early secretory pathway but also in post-Golgi membranes. Thought to act as cargo receptor at the lumenal side for incorporation of secretory cargo molecules into transport vesicles and to be involved in vesicle coat formation at the cytoplasmic side. The sequence is that of Transmembrane emp24 domain-containing protein p24beta3 from Arabidopsis thaliana (Mouse-ear cress).